The following is a 524-amino-acid chain: Probable metalloreductase AIM14 (524 aa).

The next 7 membrane-spanning stretches (helical) occupy residues 24–44, 69–89, 104–121, 143–163, 179–199, 206–226, and 230–250; these read VNIK…VLSI, SIPF…LSIF, RLGR…FISL, WISR…LYKW, FLGV…VNVM, LFYI…AFHA, and VPLL…QRFF. Residues 105-222 enclose the Ferric oxidoreductase domain; the sequence is LGRMAYCLVP…VTLWMFVVLI (118 aa). The FAD-binding FR-type domain maps to 248–372; that stretch reads RFFKSYYLHD…GGSGISFGLP (125 aa).

The protein belongs to the ferric reductase (FRE) family. AIM14 subfamily.

It localises to the membrane. In terms of biological role, probable cell surface metalloreductase. May be involved in iron or copper homeostasis. This Scheffersomyces stipitis (strain ATCC 58785 / CBS 6054 / NBRC 10063 / NRRL Y-11545) (Yeast) protein is Probable metalloreductase AIM14 (AIM14).